Reading from the N-terminus, the 563-residue chain is Probable tRNA (uracil-O(2)-)-methyltransferase (563 aa).

The C3H1-type zinc-finger motif lies at 536-563 (TIRKAPCWMSLHHPDGCPVGQEACRYEH).

It belongs to the TRM44 family.

It is found in the cytoplasm. The enzyme catalyses uridine(44) in tRNA(Ser) + S-adenosyl-L-methionine = 2'-O-methyluridine(44) in tRNA(Ser) + S-adenosyl-L-homocysteine + H(+). Its function is as follows. Probable adenosyl-L-methionine (AdoMet)-dependent tRNA (uracil-O(2)-)-methyltransferase. This Caenorhabditis elegans protein is Probable tRNA (uracil-O(2)-)-methyltransferase.